Consider the following 96-residue polypeptide: Aspartyl/glutamyl-tRNA(Asn/Gln) amidotransferase subunit C (96 aa).

Belongs to the GatC family. Heterotrimer of A, B and C subunits.

The enzyme catalyses L-glutamyl-tRNA(Gln) + L-glutamine + ATP + H2O = L-glutaminyl-tRNA(Gln) + L-glutamate + ADP + phosphate + H(+). It catalyses the reaction L-aspartyl-tRNA(Asn) + L-glutamine + ATP + H2O = L-asparaginyl-tRNA(Asn) + L-glutamate + ADP + phosphate + 2 H(+). In terms of biological role, allows the formation of correctly charged Asn-tRNA(Asn) or Gln-tRNA(Gln) through the transamidation of misacylated Asp-tRNA(Asn) or Glu-tRNA(Gln) in organisms which lack either or both of asparaginyl-tRNA or glutaminyl-tRNA synthetases. The reaction takes place in the presence of glutamine and ATP through an activated phospho-Asp-tRNA(Asn) or phospho-Glu-tRNA(Gln). In Sulfurovum sp. (strain NBC37-1), this protein is Aspartyl/glutamyl-tRNA(Asn/Gln) amidotransferase subunit C.